A 285-amino-acid chain; its full sequence is 2-dehydro-3-deoxyphosphooctonate aldolase (285 aa).

Belongs to the KdsA family.

Its subcellular location is the cytoplasm. It carries out the reaction D-arabinose 5-phosphate + phosphoenolpyruvate + H2O = 3-deoxy-alpha-D-manno-2-octulosonate-8-phosphate + phosphate. It participates in carbohydrate biosynthesis; 3-deoxy-D-manno-octulosonate biosynthesis; 3-deoxy-D-manno-octulosonate from D-ribulose 5-phosphate: step 2/3. Its pathway is bacterial outer membrane biogenesis; lipopolysaccharide biosynthesis. The polypeptide is 2-dehydro-3-deoxyphosphooctonate aldolase (Acidovorax ebreus (strain TPSY) (Diaphorobacter sp. (strain TPSY))).